The chain runs to 454 residues: Bifunctional protein GlmU (454 aa).

A pyrophosphorylase region spans residues M1–R228. UDP-N-acetyl-alpha-D-glucosamine is bound by residues L8–G11, K22, Q73, and G78–T79. D103 is a binding site for Mg(2+). UDP-N-acetyl-alpha-D-glucosamine-binding residues include G140, E154, N169, and N226. N226 is a binding site for Mg(2+). Positions A229–N249 are linker. An N-acetyltransferase region spans residues G250–K454. UDP-N-acetyl-alpha-D-glucosamine contacts are provided by R331 and K349. The active-site Proton acceptor is the H361. 2 residues coordinate UDP-N-acetyl-alpha-D-glucosamine: Y364 and N375. Residues N384–Y385, A421, and R438 contribute to the acetyl-CoA site.

The protein in the N-terminal section; belongs to the N-acetylglucosamine-1-phosphate uridyltransferase family. It in the C-terminal section; belongs to the transferase hexapeptide repeat family. In terms of assembly, homotrimer. Requires Mg(2+) as cofactor.

The protein localises to the cytoplasm. It catalyses the reaction alpha-D-glucosamine 1-phosphate + acetyl-CoA = N-acetyl-alpha-D-glucosamine 1-phosphate + CoA + H(+). The catalysed reaction is N-acetyl-alpha-D-glucosamine 1-phosphate + UTP + H(+) = UDP-N-acetyl-alpha-D-glucosamine + diphosphate. Its pathway is nucleotide-sugar biosynthesis; UDP-N-acetyl-alpha-D-glucosamine biosynthesis; N-acetyl-alpha-D-glucosamine 1-phosphate from alpha-D-glucosamine 6-phosphate (route II): step 2/2. The protein operates within nucleotide-sugar biosynthesis; UDP-N-acetyl-alpha-D-glucosamine biosynthesis; UDP-N-acetyl-alpha-D-glucosamine from N-acetyl-alpha-D-glucosamine 1-phosphate: step 1/1. It participates in bacterial outer membrane biogenesis; LPS lipid A biosynthesis. In terms of biological role, catalyzes the last two sequential reactions in the de novo biosynthetic pathway for UDP-N-acetylglucosamine (UDP-GlcNAc). The C-terminal domain catalyzes the transfer of acetyl group from acetyl coenzyme A to glucosamine-1-phosphate (GlcN-1-P) to produce N-acetylglucosamine-1-phosphate (GlcNAc-1-P), which is converted into UDP-GlcNAc by the transfer of uridine 5-monophosphate (from uridine 5-triphosphate), a reaction catalyzed by the N-terminal domain. The polypeptide is Bifunctional protein GlmU (Clostridium perfringens (strain ATCC 13124 / DSM 756 / JCM 1290 / NCIMB 6125 / NCTC 8237 / Type A)).